The following is a 919-amino-acid chain: Leucine--tRNA ligase (919 aa).

The 'HIGH' region motif lies at 83 to 93 (PYPSGKLHMGH). The 'KMSKS' region signature appears at 670 to 674 (KMSKS). An ATP-binding site is contributed by K673.

It belongs to the class-I aminoacyl-tRNA synthetase family.

The protein localises to the cytoplasm. The enzyme catalyses tRNA(Leu) + L-leucine + ATP = L-leucyl-tRNA(Leu) + AMP + diphosphate. This Psychrobacter cryohalolentis (strain ATCC BAA-1226 / DSM 17306 / VKM B-2378 / K5) protein is Leucine--tRNA ligase.